Here is a 434-residue protein sequence, read N- to C-terminus: Xylose isomerase (434 aa).

Active-site residues include H99 and D102. 7 residues coordinate Mg(2+): E230, E266, H269, D294, D305, D307, and D337.

The protein belongs to the xylose isomerase family. As to quaternary structure, homotetramer. The cofactor is Mg(2+).

The protein localises to the cytoplasm. The catalysed reaction is alpha-D-xylose = alpha-D-xylulofuranose. This chain is Xylose isomerase, found in Dinoroseobacter shibae (strain DSM 16493 / NCIMB 14021 / DFL 12).